A 181-amino-acid chain; its full sequence is ATP synthase subunit delta (181 aa).

The protein belongs to the ATPase delta chain family. As to quaternary structure, F-type ATPases have 2 components, F(1) - the catalytic core - and F(0) - the membrane proton channel. F(1) has five subunits: alpha(3), beta(3), gamma(1), delta(1), epsilon(1). F(0) has three main subunits: a(1), b(2) and c(10-14). The alpha and beta chains form an alternating ring which encloses part of the gamma chain. F(1) is attached to F(0) by a central stalk formed by the gamma and epsilon chains, while a peripheral stalk is formed by the delta and b chains.

The protein resides in the cell membrane. Its function is as follows. F(1)F(0) ATP synthase produces ATP from ADP in the presence of a proton or sodium gradient. F-type ATPases consist of two structural domains, F(1) containing the extramembraneous catalytic core and F(0) containing the membrane proton channel, linked together by a central stalk and a peripheral stalk. During catalysis, ATP synthesis in the catalytic domain of F(1) is coupled via a rotary mechanism of the central stalk subunits to proton translocation. Functionally, this protein is part of the stalk that links CF(0) to CF(1). It either transmits conformational changes from CF(0) to CF(1) or is implicated in proton conduction. In Oceanobacillus iheyensis (strain DSM 14371 / CIP 107618 / JCM 11309 / KCTC 3954 / HTE831), this protein is ATP synthase subunit delta.